The following is a 335-amino-acid chain: Pregnancy-specific beta-1-glycoprotein 5 (335 aa).

The first 34 residues, Met1–Ala34, serve as a signal peptide directing secretion. The Ig-like V-type domain maps to Gln35–Leu144. Asn104 and Asn111 each carry an N-linked (GlcNAc...) asparagine glycan. The short motif at Arg127–Asp129 is the Cell attachment site element. Ig-like C2-type domains are found at residues Pro147–Asn234 and Pro239–Thr317. 2 cysteine pairs are disulfide-bonded: Cys169-Cys217 and Cys261-Cys301. N-linked (GlcNAc...) asparagine glycosylation is found at Asn175 and Asn210.

The protein belongs to the immunoglobulin superfamily. CEA family. In terms of tissue distribution, synthesized by syncytiotrophoblast of the placenta.

Its subcellular location is the secreted. This Homo sapiens (Human) protein is Pregnancy-specific beta-1-glycoprotein 5 (PSG5).